The primary structure comprises 392 residues: Alanine racemase 2 (392 aa).

Residue lysine 40 is the Proton acceptor; specific for D-alanine of the active site. The residue at position 40 (lysine 40) is an N6-(pyridoxal phosphate)lysine. Arginine 138 provides a ligand contact to substrate. Tyrosine 266 acts as the Proton acceptor; specific for L-alanine in catalysis. Methionine 314 provides a ligand contact to substrate.

It belongs to the alanine racemase family. It depends on pyridoxal 5'-phosphate as a cofactor.

It carries out the reaction L-alanine = D-alanine. It participates in amino-acid biosynthesis; D-alanine biosynthesis; D-alanine from L-alanine: step 1/1. Its function is as follows. Catalyzes the interconversion of L-alanine and D-alanine. May also act on other amino acids. This chain is Alanine racemase 2 (alr2), found in Oceanobacillus iheyensis (strain DSM 14371 / CIP 107618 / JCM 11309 / KCTC 3954 / HTE831).